The chain runs to 129 residues: NADH-quinone oxidoreductase subunit A (129 aa).

3 helical membrane-spanning segments follow: residues 14–34, 67–87, and 95–115; these read LAIH…VAAW, FLIA…FAWA, and WLGL…LVYL.

It belongs to the complex I subunit 3 family. In terms of assembly, NDH-1 is composed of 14 different subunits. Subunits NuoA, H, J, K, L, M, N constitute the membrane sector of the complex.

The protein localises to the cell inner membrane. It carries out the reaction a quinone + NADH + 5 H(+)(in) = a quinol + NAD(+) + 4 H(+)(out). NDH-1 shuttles electrons from NADH, via FMN and iron-sulfur (Fe-S) centers, to quinones in the respiratory chain. The immediate electron acceptor for the enzyme in this species is believed to be ubiquinone. Couples the redox reaction to proton translocation (for every two electrons transferred, four hydrogen ions are translocated across the cytoplasmic membrane), and thus conserves the redox energy in a proton gradient. In Rhodopseudomonas palustris (strain ATCC BAA-98 / CGA009), this protein is NADH-quinone oxidoreductase subunit A.